A 205-amino-acid polypeptide reads, in one-letter code: Protein-L-isoaspartate O-methyltransferase (205 aa).

Ser56 is an active-site residue.

This sequence belongs to the methyltransferase superfamily. L-isoaspartyl/D-aspartyl protein methyltransferase family.

The protein resides in the cytoplasm. The catalysed reaction is [protein]-L-isoaspartate + S-adenosyl-L-methionine = [protein]-L-isoaspartate alpha-methyl ester + S-adenosyl-L-homocysteine. Its function is as follows. Catalyzes the methyl esterification of L-isoaspartyl residues in peptides and proteins that result from spontaneous decomposition of normal L-aspartyl and L-asparaginyl residues. It plays a role in the repair and/or degradation of damaged proteins. This chain is Protein-L-isoaspartate O-methyltransferase, found in Aeromonas salmonicida (strain A449).